A 229-amino-acid chain; its full sequence is Germin-like protein 12-2 (229 aa).

The N-terminal stretch at 1 to 22 (MASSNFFLLTALIALVATQAMA) is a signal peptide. Cys-32 and Cys-47 are disulfide-bonded. The 156-residue stretch at 62-217 (ANLDKPMDTT…AFQVDKKAVD (156 aa)) folds into the Cupin type-1 domain. Asn-78 carries N-linked (GlcNAc...) asparagine glycosylation. Mn(2+)-binding residues include His-111, His-113, Glu-118, and His-162.

It belongs to the germin family. In terms of assembly, oligomer (believed to be a pentamer but probably hexamer).

It is found in the secreted. The protein localises to the extracellular space. It localises to the apoplast. Its function is as follows. May play a role in plant defense. Probably has no oxalate oxidase activity even if the active site is conserved. The protein is Germin-like protein 12-2 of Oryza sativa subsp. japonica (Rice).